A 168-amino-acid polypeptide reads, in one-letter code: Transcriptional repressor NrdR (168 aa).

A zinc finger lies at 3-34 (CPFCQDAENKVIDSRESHEGSVIRRRRECLTC). One can recognise an ATP-cone domain in the interval 49 to 139 (PLIVKKDGRR…VYRSFRDIAE (91 aa)).

The protein belongs to the NrdR family. Zn(2+) is required as a cofactor.

Its function is as follows. Negatively regulates transcription of bacterial ribonucleotide reductase nrd genes and operons by binding to NrdR-boxes. The sequence is that of Transcriptional repressor NrdR from Myxococcus xanthus (strain DK1622).